The chain runs to 362 residues: 2-aminoethylphosphonate--pyruvate transaminase (362 aa).

Position 193 is an N6-(pyridoxal phosphate)lysine (Lys-193).

This sequence belongs to the class-V pyridoxal-phosphate-dependent aminotransferase family. PhnW subfamily. As to quaternary structure, homodimer. It depends on pyridoxal 5'-phosphate as a cofactor.

It carries out the reaction (2-aminoethyl)phosphonate + pyruvate = phosphonoacetaldehyde + L-alanine. Involved in phosphonate degradation. This is 2-aminoethylphosphonate--pyruvate transaminase from Bacteroides fragilis (strain ATCC 25285 / DSM 2151 / CCUG 4856 / JCM 11019 / LMG 10263 / NCTC 9343 / Onslow / VPI 2553 / EN-2).